Consider the following 158-residue polypeptide: Cyclic pyranopterin monophosphate synthase (158 aa).

Substrate-binding positions include 75–77 (LCH) and 113–114 (ME). The active site involves Asp128.

Belongs to the MoaC family. In terms of assembly, homohexamer; trimer of dimers.

It catalyses the reaction (8S)-3',8-cyclo-7,8-dihydroguanosine 5'-triphosphate = cyclic pyranopterin phosphate + diphosphate. It functions in the pathway cofactor biosynthesis; molybdopterin biosynthesis. Functionally, catalyzes the conversion of (8S)-3',8-cyclo-7,8-dihydroguanosine 5'-triphosphate to cyclic pyranopterin monophosphate (cPMP). The protein is Cyclic pyranopterin monophosphate synthase of Azorhizobium caulinodans (strain ATCC 43989 / DSM 5975 / JCM 20966 / LMG 6465 / NBRC 14845 / NCIMB 13405 / ORS 571).